The chain runs to 1091 residues: TATA element modulatory factor (1091 aa).

Disordered stretches follow at residues 42-86 and 100-280; these read IPYG…KPVR and FLSP…DAKS. A compositionally biased stretch (polar residues) spans 57 to 81; the sequence is WDTSTWGLNSTSSEPQSPPTASQAI. S73, S78, S112, and S136 each carry phosphoserine. 3 stretches are compositionally biased toward low complexity: residues 111-122, 131-142, and 194-211; these read KSPVVSKPPSKS, SSLQESSSPGQS, and SENV…TTST. Residue S213 is modified to Phosphoserine. Residues 217–234 show a composition bias toward basic and acidic residues; it reads ETKDMALEPKEQKHEDRQ. Composition is skewed to low complexity over residues 242-253 and 264-273; these read VSSFSSGTSTTS and ISESSASSRQ. 6 positions are modified to phosphoserine: S324, S326, S329, S334, S340, and S357. An interaction with Elongin BC complex region spans residues 329 to 338; sequence SLDSRSVSEI. The tract at residues 360 to 443 is disordered; the sequence is TPKTKVVEST…NQPKAPPEKE (84 aa). Acidic residues predominate over residues 368–379; the sequence is STEENAEEEEGN. Residues S411 and S540 each carry the phosphoserine modification. Coiled coils occupy residues 443-767 and 824-894; these read EDVC…STAR and IQMS…SQLE. A phosphoserine mark is found at S923 and S926. T927 is subject to Phosphothreonine. S931 bears the Phosphoserine mark. Positions 984-1090 form a coiled coil; the sequence is IENLQSQLKL…QIDELLRQRL (107 aa).

In terms of assembly, component of the SNF/SWI transcription factor complexes. Interacts with RAB6A. Interacts with TCEB1. Interacts with STAT3 and FER. Interacts with TRNP1; may regulate TRNP1 proteasomal degradation. Post-translationally, phosphorylated by FER.

It is found in the cytoplasm. It localises to the nucleus. The protein resides in the golgi apparatus membrane. In terms of biological role, potential coactivator of the androgen receptor. May play critical roles in two RAB6-dependent retrograde transport processes: one from endosomes to the Golgi and the other from the Golgi to the ER. Mediates STAT3 degradation. This is TATA element modulatory factor (Tmf1) from Mus musculus (Mouse).